Here is a 716-residue protein sequence, read N- to C-terminus: Protein C-mannosyl-transferase DPY19L3 (716 aa).

Topologically, residues 1–43 (MMYIRQRKETKPIEVSEDFPSPKEDVKLEKKLPSGCASGRFWK) are cytoplasmic. Residues 44–64 (ILSSAVGGTVALCIGLLTSVY) traverse the membrane as a helical segment. The Lumenal segment spans residues 65 to 154 (LATLHENDLW…RVLPIQKYLE (90 aa)). The N-linked (GlcNAc...) asparagine glycan is linked to asparagine 118. A helical transmembrane segment spans residues 155 to 182 (PVYFYIYTLFGLQAVYVTALYITSWLLS). Residues 183 to 184 (GT) are Cytoplasmic-facing. An intramembrane region (name=3) is located at residues 185-197 (WLSGLLAALWYVT). Residues 198–215 (NRIDTTRVEFTIPLRENW) lie on the Cytoplasmic side of the membrane. Residues 216–230 (ALPFFAIQIAAITYF) constitute an intramembrane region (name=4). At 231-239 (LRPNLQPLS) the chain is on the cytoplasmic side. The helical transmembrane segment at 240 to 256 (ERLTLLAIFVSTFLFSL) threads the bilayer. Over 257–262 (TWQFNQ) the chain is Lumenal. A helical membrane pass occupies residues 263–279 (FMMLLQALVLFILDSLD). Topologically, residues 280–289 (MLPAMKATWL) are cytoplasmic. The chain crosses the membrane as a helical span at residues 290-306 (YGIQISCLLLVCTLQFF). Over 307–308 (NS) the chain is Lumenal. Residues 309–323 (MILGSLLISFNLSVL) traverse the membrane as a helical segment. Over 324 to 338 (IVRKLQKNLKTGSFL) the chain is Cytoplasmic. Residues 339–359 (TRIWKLLLHLLLVFCLTLFLN) form a helical membrane-spanning segment. Over 360–414 (NIIKKVLNLKSDEHIFKFLKAKFGFGATRDFDANLYLCEEAFGLLPLNTFQRLSE) the chain is Lumenal. Residues 415 to 437 (TLLFYAYMFVLVVTVVTASVVAF) traverse the membrane as a helical segment. At 438–465 (HNLSDSTSLKSMDQTRKRAVDLKPEAAY) the chain is on the cytoplasmic side. A helical transmembrane segment spans residues 466 to 485 (NLIHTILFGVLALSTMRMKY). Over 486–487 (LW) the chain is Lumenal. A helical membrane pass occupies residues 488–499 (TSHMCVFASFGL). The Cytoplasmic segment spans residues 500–522 (CSSEVWELLLRLVHLCNPKRIWV). A helical transmembrane segment spans residues 523-539 (LRYLVPVLTLLYLCYKS). Residues 540-716 (WPGVMDELSE…FHVYKLSRNK (177 aa)) lie on the Lumenal side of the membrane. N-linked (GlcNAc...) asparagine glycosylation occurs at asparagine 704.

It belongs to the dpy-19 family.

It is found in the endoplasmic reticulum membrane. The catalysed reaction is L-tryptophyl-[protein] + a di-trans,poly-cis-dolichyl beta-D-mannosyl phosphate = C-alpha-D-mannosyl-L-tryptophyl-[protein] + a di-trans,poly-cis-dolichyl phosphate + H(+). It functions in the pathway protein modification; protein glycosylation. In terms of biological role, C-mannosyltransferase that mediates C-mannosylation of tryptophan residues on target proteins. The reaction occurs on the luminal side of the endoplasmic reticulum and involves the transfer of a mannose unit from a dolichylphosphate mannose (Dol-P-Man) donor to an acceptor protein containing a WxxW or WxxC consensus sequence. C-mannosylates RSPO1, a Wnt signaling regulator, preferentially at the first Trp residue in the sequence WxxW. C-mannosylates the netrin receptor UNC5A, preferentially at the third tryptophan of WxxWxxWxxC sequence. The polypeptide is Protein C-mannosyl-transferase DPY19L3 (Dpy19l3) (Mus musculus (Mouse)).